The sequence spans 530 residues: Autoinducer-2 kinase (530 aa).

The protein belongs to the FGGY kinase family.

The protein resides in the cytoplasm. The catalysed reaction is (S)-4,5-dihydroxypentane-2,3-dione + ATP = (2S)-2-hydroxy-3,4-dioxopentyl phosphate + ADP + H(+). Functionally, catalyzes the phosphorylation of autoinducer-2 (AI-2) to phospho-AI-2, which subsequently inactivates the transcriptional regulator LsrR and leads to the transcription of the lsr operon. Phosphorylates the ring-open form of (S)-4,5-dihydroxypentane-2,3-dione (DPD), which is the precursor to all AI-2 signaling molecules, at the C5 position. The protein is Autoinducer-2 kinase of Salmonella typhimurium (strain LT2 / SGSC1412 / ATCC 700720).